The sequence spans 122 residues: Insulin-like growth factor 1 (122 aa).

Residues 49-77 (GPETLCGAELVDALQFVCGDRGFYFNKPT) are b. 3 disulfide bridges follow: Cys54–Cys96, Cys66–Cys109, and Cys95–Cys100. The tract at residues 78–89 (GYGSSSRRAPQT) is c. Residues 90 to 110 (GIVDECCFRSCDLRRLEMYCA) form an a region. The interval 111-118 (PLKPAKSA) is d. Positions 119–122 (RSVR) are cleaved as a propeptide — e peptide.

The protein belongs to the insulin family. In terms of assembly, forms a ternary complex with IGFR1 and ITGAV:ITGB3. Forms a ternary complex with IGFR1 and ITGA6:ITGB4. Forms a ternary complex with IGFBP3 and ALS.

Its subcellular location is the secreted. The insulin-like growth factors, isolated from plasma, are structurally and functionally related to insulin but have a much higher growth-promoting activity. May be a physiological regulator of [1-14C]-2-deoxy-D-glucose (2DG) transport and glycogen synthesis in osteoblasts. Stimulates glucose transport in bone-derived osteoblastic (PyMS) cells and is effective at much lower concentrations than insulin, not only regarding glycogen and DNA synthesis but also with regard to enhancing glucose uptake. May play a role in synapse maturation. Ca(2+)-dependent exocytosis of IGF1 is required for sensory perception of smell in the olfactory bulb. Acts as a ligand for IGF1R. Binds to the alpha subunit of IGF1R, leading to the activation of the intrinsic tyrosine kinase activity which autophosphorylates tyrosine residues in the beta subunit thus initiating a cascade of down-stream signaling events leading to activation of the PI3K-AKT/PKB and the Ras-MAPK pathways. Binds to integrins ITGAV:ITGB3 and ITGA6:ITGB4. Its binding to integrins and subsequent ternary complex formation with integrins and IGFR1 are essential for IGF1 signaling. Induces the phosphorylation and activation of IGFR1, MAPK3/ERK1, MAPK1/ERK2 and AKT1. As part of the MAPK/ERK signaling pathway, acts as a negative regulator of apoptosis in cardiomyocytes via promotion of STUB1/CHIP-mediated ubiquitination and degradation of ICER-type isoforms of CREM. The polypeptide is Insulin-like growth factor 1 (Equus caballus (Horse)).